Here is a 235-residue protein sequence, read N- to C-terminus: UDP-2,3-diacylglucosamine hydrolase (235 aa).

Residues aspartate 9, histidine 11, aspartate 42, asparagine 80, and histidine 115 each coordinate Mn(2+). Residue 80 to 81 (NR) coordinates substrate. Substrate-binding residues include aspartate 123, serine 161, lysine 165, lysine 168, and histidine 196. Residues histidine 196 and histidine 198 each contribute to the Mn(2+) site.

The protein belongs to the LpxH family. The cofactor is Mn(2+).

It localises to the cell inner membrane. The enzyme catalyses UDP-2-N,3-O-bis[(3R)-3-hydroxytetradecanoyl]-alpha-D-glucosamine + H2O = 2-N,3-O-bis[(3R)-3-hydroxytetradecanoyl]-alpha-D-glucosaminyl 1-phosphate + UMP + 2 H(+). It participates in glycolipid biosynthesis; lipid IV(A) biosynthesis; lipid IV(A) from (3R)-3-hydroxytetradecanoyl-[acyl-carrier-protein] and UDP-N-acetyl-alpha-D-glucosamine: step 4/6. Hydrolyzes the pyrophosphate bond of UDP-2,3-diacylglucosamine to yield 2,3-diacylglucosamine 1-phosphate (lipid X) and UMP by catalyzing the attack of water at the alpha-P atom. Involved in the biosynthesis of lipid A, a phosphorylated glycolipid that anchors the lipopolysaccharide to the outer membrane of the cell. The sequence is that of UDP-2,3-diacylglucosamine hydrolase from Actinobacillus succinogenes (strain ATCC 55618 / DSM 22257 / CCUG 43843 / 130Z).